The sequence spans 542 residues: Hydroxylamine reductase (542 aa).

The [4Fe-4S] cluster site is built by C5, C8, C17, and C23. Residues H237, E261, C305, C397, C425, C450, E485, and K487 each contribute to the hybrid [4Fe-2O-2S] cluster site. Residue C397 is modified to Cysteine persulfide.

Belongs to the HCP family. The cofactor is [4Fe-4S] cluster. Requires hybrid [4Fe-2O-2S] cluster as cofactor.

The protein localises to the cytoplasm. It carries out the reaction A + NH4(+) + H2O = hydroxylamine + AH2 + H(+). Its function is as follows. Catalyzes the reduction of hydroxylamine to form NH(3) and H(2)O. The polypeptide is Hydroxylamine reductase (Acetivibrio thermocellus (strain ATCC 27405 / DSM 1237 / JCM 9322 / NBRC 103400 / NCIMB 10682 / NRRL B-4536 / VPI 7372) (Clostridium thermocellum)).